Reading from the N-terminus, the 466-residue chain is UDP-glycosyltransferase 79 (466 aa).

The active-site Proton acceptor is H27. Position 27 (H27) interacts with UDP-alpha-D-glucose. D120 acts as the Charge relay in catalysis. UDP-alpha-D-glucose is bound by residues S142, T291, F343, C344, H361, W364, N365, S366, E369, D385, and Q386. T291, F343, C344, and H361 together coordinate UDP. UDP contacts are provided by N365, S366, and E369.

This sequence belongs to the UDP-glycosyltransferase family.

Involved in the detoxification of the Fusarium mycotoxin deoxynivalenol by the transfer of glucose from UDP-D-glucose to the hydroxyl group at C-3, forming deoxynivalenol-3-O-beta-D-glucoside. The protein is UDP-glycosyltransferase 79 of Oryza sativa subsp. japonica (Rice).